A 275-amino-acid chain; its full sequence is Nuclear egress protein 2 (275 aa).

Over 1 to 251 (MAGLGKPYTG…GLKHLRIGPP (251 aa)) the chain is Perinuclear space. Positions 137 to 181 (KGRLGLDARPMMASMWISCFVRMPRVQLAFRFMGPEDAGRTRRIL) are interaction with NEC1. Residues 252–272 (ALVLAAGLVLGAAIWWVVGAG) form a helical membrane-spanning segment. At 273 to 275 (ARL) the chain is on the nuclear side.

The protein belongs to the herpesviridae NEC2 protein family. In terms of assembly, forms a heterohexameric complex with NEC1. Interacts with glycoprotein D; this interaction recruits glycoprotein D and glycoprotein M to the inner nuclear membrane. Post-translationally, phosphorylated by viral kinase US3.

The protein localises to the host nucleus inner membrane. Functionally, plays an essential role in virion nuclear egress, the first step of virion release from infected cell. Within the host nucleus, NEC1 interacts with the newly formed capsid through the vertexes and directs it to the inner nuclear membrane by associating with NEC2. Induces the budding of the capsid at the inner nuclear membrane as well as its envelopment into the perinuclear space. There, the NEC1/NEC2 complex promotes the fusion of the enveloped capsid with the outer nuclear membrane and the subsequent release of the viral capsid into the cytoplasm where it will reach the secondary budding sites in the host Golgi or trans-Golgi network. The chain is Nuclear egress protein 2 from Homo sapiens (Human).